A 179-amino-acid polypeptide reads, in one-letter code: MGETVVHGTTVLAIKKDGKVVMAGDGQVTMGDTVVKHQAKKVRKMYHDRILTGFSGSTADAFTLFERLEGKLEQYNGNLKRAAVELAKDWRMDRALRRLEALLVAADRNDCFILSGTGDVIEPDDGLAAVGSGAPYALAAARALIRHTGMSIREIAEEAMNIAASICIYTNREFTFEEL.

Thr-9 is an active-site residue. Na(+) contacts are provided by Ala-164, Cys-167, and Thr-170.

It belongs to the peptidase T1B family. HslV subfamily. In terms of assembly, a double ring-shaped homohexamer of HslV is capped on each side by a ring-shaped HslU homohexamer. The assembly of the HslU/HslV complex is dependent on binding of ATP.

It is found in the cytoplasm. The enzyme catalyses ATP-dependent cleavage of peptide bonds with broad specificity.. With respect to regulation, allosterically activated by HslU binding. Its function is as follows. Protease subunit of a proteasome-like degradation complex believed to be a general protein degrading machinery. The protein is ATP-dependent protease subunit HslV of Syntrophobacter fumaroxidans (strain DSM 10017 / MPOB).